The chain runs to 433 residues: C4-dicarboxylate transport protein (433 aa).

Helical transmembrane passes span isoleucine 8–proline 28, leucine 44–methionine 64, leucine 78–leucine 98, glycine 148–glycine 168, isoleucine 188–isoleucine 208, leucine 222–alanine 242, isoleucine 307–methionine 327, and alanine 355–isoleucine 375.

This sequence belongs to the dicarboxylate/amino acid:cation symporter (DAACS) (TC 2.A.23) family.

The protein localises to the cell inner membrane. Responsible for the transport of dicarboxylates such as succinate, fumarate, and malate from the periplasm across the membrane. This Cupriavidus taiwanensis (strain DSM 17343 / BCRC 17206 / CCUG 44338 / CIP 107171 / LMG 19424 / R1) (Ralstonia taiwanensis (strain LMG 19424)) protein is C4-dicarboxylate transport protein.